The chain runs to 329 residues: 4-hydroxythreonine-4-phosphate dehydrogenase (329 aa).

The substrate site is built by His136 and Thr137. 3 residues coordinate a divalent metal cation: His166, His211, and His266. Positions 274, 283, and 292 each coordinate substrate.

It belongs to the PdxA family. Homodimer. The cofactor is Zn(2+). Mg(2+) serves as cofactor. It depends on Co(2+) as a cofactor.

The protein localises to the cytoplasm. It carries out the reaction 4-(phosphooxy)-L-threonine + NAD(+) = 3-amino-2-oxopropyl phosphate + CO2 + NADH. It participates in cofactor biosynthesis; pyridoxine 5'-phosphate biosynthesis; pyridoxine 5'-phosphate from D-erythrose 4-phosphate: step 4/5. Functionally, catalyzes the NAD(P)-dependent oxidation of 4-(phosphooxy)-L-threonine (HTP) into 2-amino-3-oxo-4-(phosphooxy)butyric acid which spontaneously decarboxylates to form 3-amino-2-oxopropyl phosphate (AHAP). The protein is 4-hydroxythreonine-4-phosphate dehydrogenase of Shigella flexneri serotype 5b (strain 8401).